The chain runs to 194 residues: 7-methyl-GTP pyrophosphatase (194 aa).

Residue D69 is the Proton acceptor of the active site.

Belongs to the Maf family. YceF subfamily. It depends on a divalent metal cation as a cofactor.

The protein localises to the cytoplasm. The catalysed reaction is N(7)-methyl-GTP + H2O = N(7)-methyl-GMP + diphosphate + H(+). Functionally, nucleoside triphosphate pyrophosphatase that hydrolyzes 7-methyl-GTP (m(7)GTP). May have a dual role in cell division arrest and in preventing the incorporation of modified nucleotides into cellular nucleic acids. This chain is 7-methyl-GTP pyrophosphatase (yceF), found in Shigella flexneri.